A 340-amino-acid polypeptide reads, in one-letter code: MSATTWSASFGGIAGSDLEAELAQARTVDHDANEAADLEHAEATHHHARVAAQGHARGDAQPPAGALARDDGRRAADYSVQLRGVGKRYGEREVLSGFDLSIERGSFVAIVGRSGCGKSTLLRLVAGLEKATSGVLEKRNEEGGPLDTRIMFQDARLLPWKSVLQNVMLGLGRSAREDARAVLAEVGLLERANDWPAQLSGGQRQRVALARALVHRPQLLLLDEPLGALDALTRIEMHALIERLWREHRFTALLVTHDVHEAVALGDRILLIEEGRIALDQPVPLARPRARASAGFAALEEHVLQRVLKTAPNDDALSDGAYDARDEGRARRPTDVRWAV.

The segment at 44 to 72 is disordered; the sequence is THHHARVAAQGHARGDAQPPAGALARDDG. Residues 80 to 299 enclose the ABC transporter domain; it reads VQLRGVGKRY…ARASAGFAAL (220 aa). An ATP-binding site is contributed by 112–119; it reads GRSGCGKS.

Belongs to the ABC transporter superfamily. Aliphatic sulfonates importer (TC 3.A.1.17.2) family. In terms of assembly, the complex is composed of two ATP-binding proteins (SsuB), two transmembrane proteins (SsuC) and a solute-binding protein (SsuA).

The protein resides in the cell inner membrane. It carries out the reaction ATP + H2O + aliphatic sulfonate-[sulfonate-binding protein]Side 1 = ADP + phosphate + aliphatic sulfonateSide 2 + [sulfonate-binding protein]Side 1.. Its function is as follows. Part of the ABC transporter complex SsuABC involved in aliphatic sulfonates import. Responsible for energy coupling to the transport system. The sequence is that of Aliphatic sulfonates import ATP-binding protein SsuB 1 from Paraburkholderia xenovorans (strain LB400).